A 631-amino-acid polypeptide reads, in one-letter code: Peptide-N(4)-(N-acetyl-beta-glucosaminyl)asparagine amidase (631 aa).

A PUB domain is found at 34-97 (EAVRILLVLL…PSSNAYTLPT (64 aa)). Ser126 carries the phosphoserine modification. Zn(2+) contacts are provided by Cys246, Cys249, Cys272, and Cys273. Cys296 (nucleophile) is an active-site residue. Catalysis depends on residues His323 and Asp340. A PAW domain is found at 441-631 (ELKGRSSGSL…YPFDLQVQLH (191 aa)).

Belongs to the transglutaminase-like superfamily. PNGase family. Requires Zn(2+) as cofactor.

The protein resides in the cytoplasm. It catalyses the reaction Hydrolysis of an N(4)-(acetyl-beta-D-glucosaminyl)asparagine residue in which the glucosamine residue may be further glycosylated, to yield a (substituted) N-acetyl-beta-D-glucosaminylamine and a peptide containing an aspartate residue.. Specifically deglycosylates the denatured form of N-linked glycoproteins in the cytoplasm and assists their proteasome-mediated degradation. Cleaves the beta-aspartyl-glucosamine (GlcNAc) of the glycan and the amide side chain of Asn, converting Asn to Asp. Prefers proteins containing high-mannose over those bearing complex type oligosaccharides. Can recognize misfolded proteins in the endoplasmic reticulum that are exported to the cytosol to be destroyed and deglycosylate them, while it has no activity toward native proteins. Deglycosylation is a prerequisite for subsequent proteasome-mediated degradation of some, but not all, misfolded glycoproteins. The sequence is that of Peptide-N(4)-(N-acetyl-beta-glucosaminyl)asparagine amidase (Pngl) from Drosophila melanogaster (Fruit fly).